Consider the following 226-residue polypeptide: tRNA (guanine-N(7)-)-methyltransferase (226 aa).

Positions 1–22 (MTTPQQPHGPLRSFGRLKSRPV) are disordered. The S-adenosyl-L-methionine site is built by Glu59, Glu84, Asp111, and Asp133. The active site involves Asp133. Lys137 contacts substrate. The interaction with RNA stretch occupies residues 139-144 (RHNKRR). Substrate contacts are provided by residues Asp169 and 206–209 (TRYE).

This sequence belongs to the class I-like SAM-binding methyltransferase superfamily. TrmB family.

The catalysed reaction is guanosine(46) in tRNA + S-adenosyl-L-methionine = N(7)-methylguanosine(46) in tRNA + S-adenosyl-L-homocysteine. It functions in the pathway tRNA modification; N(7)-methylguanine-tRNA biosynthesis. Functionally, catalyzes the formation of N(7)-methylguanine at position 46 (m7G46) in tRNA. The protein is tRNA (guanine-N(7)-)-methyltransferase of Caulobacter vibrioides (strain ATCC 19089 / CIP 103742 / CB 15) (Caulobacter crescentus).